Reading from the N-terminus, the 209-residue chain is MKDCENHGHSRRKLIRRIFWSIIFVLFIIFLTILLIWAILQPSKPRFILQDATVYAFNVSGNPPNLLTSNFQITLSSRNPNNKIGIYYDRLDVYATYRSQQITFPTSIPPTYQGHKDVDIWSPFVYGTSVPIAPFNGVSLDTDKDNGVVLLIIRADGRVRWKVGTFITGKYHLHVKCPAYINFGNKANGVIVGDNAVKYTFTTSCSVSV.

A helical membrane pass occupies residues 18–38; the sequence is IFWSIIFVLFIIFLTILLIWA. A glycan (N-linked (GlcNAc...) asparagine) is linked at Asn-58.

Expressed in rosette leaves, cauline leaves, stems, and siliques, and at lower levels in roots and flowers.

The protein resides in the cell membrane. May play a role in plant immunity. This is NDR1/HIN1-like protein 1 from Arabidopsis thaliana (Mouse-ear cress).